The chain runs to 111 residues: Putative pterin-4-alpha-carbinolamine dehydratase (111 aa).

It belongs to the pterin-4-alpha-carbinolamine dehydratase family.

It catalyses the reaction (4aS,6R)-4a-hydroxy-L-erythro-5,6,7,8-tetrahydrobiopterin = (6R)-L-erythro-6,7-dihydrobiopterin + H2O. In Alkaliphilus metalliredigens (strain QYMF), this protein is Putative pterin-4-alpha-carbinolamine dehydratase.